We begin with the raw amino-acid sequence, 156 residues long: Cell division protein SepF (156 aa).

Residues 15-58 (SDVVPEDEDDEVIDEEPESSFDTDRSVTPIPAASTQPSTSQRKS) are disordered. Positions 18 to 35 (VPEDEDDEVIDEEPESSF) are enriched in acidic residues. The span at 47-57 (ASTQPSTSQRK) shows a compositional bias: polar residues.

Belongs to the SepF family. In terms of assembly, homodimer. Interacts with FtsZ.

The protein resides in the cytoplasm. Cell division protein that is part of the divisome complex and is recruited early to the Z-ring. Probably stimulates Z-ring formation, perhaps through the cross-linking of FtsZ protofilaments. Its function overlaps with FtsA. The protein is Cell division protein SepF of Bifidobacterium animalis subsp. lactis (strain AD011).